We begin with the raw amino-acid sequence, 135 residues long: ATP synthase epsilon chain (135 aa).

Belongs to the ATPase epsilon chain family. In terms of assembly, F-type ATPases have 2 components, CF(1) - the catalytic core - and CF(0) - the membrane proton channel. CF(1) has five subunits: alpha(3), beta(3), gamma(1), delta(1), epsilon(1). CF(0) has three main subunits: a, b and c.

It localises to the cell inner membrane. Functionally, produces ATP from ADP in the presence of a proton gradient across the membrane. The protein is ATP synthase epsilon chain of Rhizobium johnstonii (strain DSM 114642 / LMG 32736 / 3841) (Rhizobium leguminosarum bv. viciae).